We begin with the raw amino-acid sequence, 126 residues long: Large ribosomal subunit protein bL12 (126 aa).

Belongs to the bacterial ribosomal protein bL12 family. In terms of assembly, homodimer. Part of the ribosomal stalk of the 50S ribosomal subunit. Forms a multimeric L10(L12)X complex, where L10 forms an elongated spine to which 2 to 4 L12 dimers bind in a sequential fashion. Binds GTP-bound translation factors.

In terms of biological role, forms part of the ribosomal stalk which helps the ribosome interact with GTP-bound translation factors. Is thus essential for accurate translation. The chain is Large ribosomal subunit protein bL12 from Methylobacterium sp. (strain 4-46).